We begin with the raw amino-acid sequence, 1650 residues long: Phosphatidylinositol 3,4,5-trisphosphate-dependent Rac exchanger 1 protein (1650 aa).

The segment covering 1 to 19 (MEAPGSGGGDGGGDPGGDG) has biased composition (gly residues). The interval 1–33 (MEAPGSGGGDGGGDPGGDGAHPDARGPVSGPCA) is disordered. The DH domain maps to 44 to 235 (LRLCVLNEIL…KTVCSNINET (192 aa)). The 122-residue stretch at 266–387 (ELLLQGNLLK…WLDALIRERE (122 aa)) folds into the PH domain. Residue serine 314 is modified to Phosphoserine. DEP domains are found at residues 416–491 (MSKK…RFRY) and 518–592 (SLYA…RFHA). Residues 620 to 698 (RLLIPPQEDD…SRRPLRLLVA (79 aa)) enclose the PDZ domain. The segment at 793-813 (ARASQGAPDEDPQEDDQPDSA) is disordered. Residues 800–810 (PDEDPQEDDQP) are compositionally biased toward acidic residues. A Phosphoserine modification is found at serine 991. Disordered stretches follow at residues 1022-1047 (SPAV…GAPS) and 1099-1129 (PTSA…EVDR). Polar residues predominate over residues 1030–1047 (QGQGLNDSSYGSASGAPS). A compositionally biased stretch (low complexity) spans 1109–1122 (PSLVEETSSSPPVS). 2 positions are modified to phosphoserine: serine 1186 and serine 1191.

In terms of assembly, interacts preferentially with RAC2. Interacts with RAC1. Interacts with AUTS2.

It localises to the cytoplasm. The protein resides in the cytosol. It is found in the cell membrane. Functionally, functions as a RAC guanine nucleotide exchange factor (GEF), which activates the Rac proteins by exchanging bound GDP for free GTP. Its activity is synergistically activated by phosphatidylinositol 3,4,5-trisphosphate and the beta gamma subunits of heterotrimeric G protein. May function downstream of heterotrimeric G proteins in neutrophils. In Mus musculus (Mouse), this protein is Phosphatidylinositol 3,4,5-trisphosphate-dependent Rac exchanger 1 protein (Prex1).